The chain runs to 284 residues: ADP-polyphosphate phosphotransferase 3 (284 aa).

2 stretches are compositionally biased toward basic and acidic residues: residues 1 to 22 and 260 to 277; these read MDKHTDDRKKNNHWKAEDRKSA and DLGKRQKRPADFEGDTRR. Disordered regions lie at residues 1–32 and 260–284; these read MDKHTDDRKKNNHWKAEDRKSAATEASETRSG and DLGKRQKRPADFEGDTRRRTVPNLF.

The protein belongs to the polyphosphate kinase 2 (PPK2) family. Class I subfamily.

The enzyme catalyses [phosphate](n) + ATP = [phosphate](n+1) + ADP. It catalyses the reaction [phosphate](n) + GTP = [phosphate](n+1) + GDP. Uses inorganic polyphosphate (polyP) as a donor to convert ADP to ATP. Can also convert GDP to GTP, with lower efficiency. The protein is ADP-polyphosphate phosphotransferase 3 of Rhizobium meliloti (strain 1021) (Ensifer meliloti).